Here is a 173-residue protein sequence, read N- to C-terminus: Co-chaperone protein HscB homolog (173 aa).

The 73-residue stretch at Asn3–Ile75 folds into the J domain.

Belongs to the HscB family. In terms of assembly, interacts with HscA and stimulates its ATPase activity.

Functionally, co-chaperone involved in the maturation of iron-sulfur cluster-containing proteins. Seems to help targeting proteins to be folded toward HscA. This chain is Co-chaperone protein HscB homolog, found in Haemophilus ducreyi (strain 35000HP / ATCC 700724).